Consider the following 518-residue polypeptide: Cytochrome P450 monooxygenase pyr3 (518 aa).

A helical transmembrane segment spans residues 26–46 (GVAIVLFLAPLALHLVSSYLF). Cysteine 458 is a binding site for heme.

The protein belongs to the cytochrome P450 family. Heme serves as cofactor.

The protein localises to the membrane. It functions in the pathway secondary metabolite biosynthesis; terpenoid biosynthesis. Functionally, cytochrome P450 monooxygenase; part of the gene cluster that mediates the biosynthesis of pyripyropene A, a specific human acyl-coenzyme A:cholesterol acyltransferase 2 inhibitor. The first step of the pathway is the synthesis of nicotinyl-CoA from nicotinic acid by the nicotinic acid-CoA ligase pyr1. Nicotinyl-CoA is then a substrate of polyketide synthase pyr2 to produce 4-hydroxy-6-(3-pyridinyl)-2H-pyran-2-one (HPPO) which is further prenylated by the polyprenyl transferase pyr6 to yield farnesyl-HPPO. The next steps consist of an epoxidation of farnesyl-HPPO to epoxyfarnesyl-HPPO by FAD-dependent monooxygenase pyr5 and a cyclization of the terpenoid portion by the terpene cyclase pyr4 to yield deacetyl-pyripyropene E. The 2 cytochrome P450 monooxygenases pyr3 and pyr9, and the 2 acetyltransferases pyr7 and pyr8 are involved in the conversion of deacetyl-pyripyropene E into pyripyropene A through several cycles of oxidation and acetylation steps. Pyr7 acetylates deacetyl-pyripyropene E to pyripyropene E which is oxidized to 11-deacetyl-pyripyropene O by pyr3, which is in turn acetylated into pyripyropene O by pyr8. Pyripyropene O is then oxidized to deacetyl-pyripyropene A by pyr9. Deacetyl-pyripyropene A is finally acetylated to pyripyropene A by pyr8. This Aspergillus fumigatus (strain ATCC MYA-4609 / CBS 101355 / FGSC A1100 / Af293) (Neosartorya fumigata) protein is Cytochrome P450 monooxygenase pyr3.